The following is an 819-amino-acid chain: Lon protease (819 aa).

Residues 1 to 14 (MNSTNNTDSQNLDP) show a composition bias toward polar residues. A disordered region spans residues 1 to 41 (MNSTNNTDSQNLDPNASEVEKLLDESAEAEEKTDDHTPPSE). Basic and acidic residues predominate over residues 18–38 (EVEKLLDESAEAEEKTDDHTP). A Lon N-terminal domain is found at 42–239 (LFILPLNKRP…KALVLLKKEL (198 aa)). 392–399 (GPPGVGKT) contributes to the ATP binding site. Positions 634–818 (KTPVGVATGL…DDVFKIAFPG (185 aa)) constitute a Lon proteolytic domain. Residues serine 724 and lysine 767 contribute to the active site.

This sequence belongs to the peptidase S16 family. In terms of assembly, homohexamer. Organized in a ring with a central cavity.

It is found in the cytoplasm. The catalysed reaction is Hydrolysis of proteins in presence of ATP.. Its function is as follows. ATP-dependent serine protease that mediates the selective degradation of mutant and abnormal proteins as well as certain short-lived regulatory proteins. Required for cellular homeostasis and for survival from DNA damage and developmental changes induced by stress. Degrades polypeptides processively to yield small peptide fragments that are 5 to 10 amino acids long. Binds to DNA in a double-stranded, site-specific manner. In Chlamydia muridarum (strain MoPn / Nigg), this protein is Lon protease.